The following is a 307-amino-acid chain: Dihydroorotate dehydrogenase B (NAD(+)), catalytic subunit (307 aa).

FMN-binding positions include S22 and 46-47 (KT). Substrate-binding positions include K46, 70-74 (NAVGL), and N128. N128 lines the FMN pocket. The Nucleophile role is filled by C131. FMN-binding residues include K166 and I192. 193-194 (NT) is a substrate binding site. Residues G218, 244-245 (GG), and 266-267 (GT) contribute to the FMN site.

Belongs to the dihydroorotate dehydrogenase family. Type 1 subfamily. Heterotetramer of 2 PyrK and 2 PyrD type B subunits. FMN is required as a cofactor.

Its subcellular location is the cytoplasm. The catalysed reaction is (S)-dihydroorotate + NAD(+) = orotate + NADH + H(+). Its pathway is pyrimidine metabolism; UMP biosynthesis via de novo pathway; orotate from (S)-dihydroorotate (NAD(+) route): step 1/1. Catalyzes the conversion of dihydroorotate to orotate with NAD(+) as electron acceptor. This is Dihydroorotate dehydrogenase B (NAD(+)), catalytic subunit (pyrD) from Desulforudis audaxviator (strain MP104C).